A 311-amino-acid chain; its full sequence is Dehydrogenase/reductase SDR family member 7C (311 aa).

An N-terminal signal peptide occupies residues Met-1–Gly-18. NAD(+) is bound by residues Ser-47, Leu-49, Tyr-191, Lys-195, and Ser-226. Tyr-191 acts as the Proton acceptor in catalysis.

The protein belongs to the short-chain dehydrogenases/reductases (SDR) family.

It is found in the sarcoplasmic reticulum membrane. The enzyme catalyses all-trans-retinol + NAD(+) = all-trans-retinal + NADH + H(+). Functionally, NADH-dependent oxidoreductase which catalyzes the oxidation of all-trans-retinol to all-trans-retinal. Plays a role in the regulation of cardiac and skeletal muscle metabolic functions. Maintains Ca(2+) intracellular homeostasis by repressing Ca(2+) release from the sarcoplasmic reticulum (SR) in myotubes, possibly through local alternations in NAD/NADH or retinol/retinal. Also plays a role in Ca(2+) homeostasis by controlling Ca(2+) overload in the cytosol and the SR in myotubes. Involved in glucose uptake into skeletal muscles and muscle performance by activating PI3K and mTORC2-mediated AKT1 phosphorylation signaling pathways, possibly through the action of its downstream catalytic product all-trans-retinoic acid. The protein is Dehydrogenase/reductase SDR family member 7C (DHRS7C) of Bos taurus (Bovine).